A 676-amino-acid chain; its full sequence is RNA helicase NPH-II (676 aa).

Residues phenylalanine 172 to histidine 347 form the Helicase ATP-binding domain. Glycine 185–threonine 192 is a binding site for ATP. The short motif at aspartate 296 to histidine 299 is the DEXH box element. One can recognise a Helicase C-terminal domain in the interval asparagine 366–asparagine 535.

It belongs to the DEAD box helicase family. DEAH subfamily. In terms of assembly, monomer.

The protein localises to the virion. The catalysed reaction is ATP + H2O = ADP + phosphate + H(+). Its function is as follows. NTP-dependent helicase that catalyzes unidirectional unwinding of 3'tailed duplex RNAs and plays an important role during transcription of early mRNAs, presumably by preventing R-loop formation behind the elongating RNA polymerase. Might also play a role in the export of newly synthesized mRNA chains out of the core into the cytoplasm. Required for replication and propagation of viral particles. This is RNA helicase NPH-II (OPG084) from Vaccinia virus (strain Copenhagen) (VACV).